A 290-amino-acid chain; its full sequence is 4-diphosphocytidyl-2-C-methyl-D-erythritol kinase (290 aa).

Residue Lys13 is part of the active site. 93 to 103 (PVQAGLGGGSA) serves as a coordination point for ATP. Residue Asp135 is part of the active site.

The protein belongs to the GHMP kinase family. IspE subfamily.

The catalysed reaction is 4-CDP-2-C-methyl-D-erythritol + ATP = 4-CDP-2-C-methyl-D-erythritol 2-phosphate + ADP + H(+). It participates in isoprenoid biosynthesis; isopentenyl diphosphate biosynthesis via DXP pathway; isopentenyl diphosphate from 1-deoxy-D-xylulose 5-phosphate: step 3/6. Catalyzes the phosphorylation of the position 2 hydroxy group of 4-diphosphocytidyl-2C-methyl-D-erythritol. In Desulfitobacterium hafniense (strain Y51), this protein is 4-diphosphocytidyl-2-C-methyl-D-erythritol kinase.